The chain runs to 312 residues: Small ribosomal subunit biogenesis GTPase RsgA (312 aa).

The 160-residue stretch at 86 to 245 (QSFLKRPAVA…LADTPGFNRP (160 aa)) folds into the CP-type G domain. GTP contacts are provided by residues 135-138 (TKID) and 187-195 (GPSGVGKTS). Residues Cys270, Cys275, His277, and Cys283 each contribute to the Zn(2+) site.

This sequence belongs to the TRAFAC class YlqF/YawG GTPase family. RsgA subfamily. As to quaternary structure, monomer. Associates with 30S ribosomal subunit, binds 16S rRNA. Zn(2+) is required as a cofactor.

The protein resides in the cytoplasm. Its function is as follows. One of several proteins that assist in the late maturation steps of the functional core of the 30S ribosomal subunit. Helps release RbfA from mature subunits. May play a role in the assembly of ribosomal proteins into the subunit. Circularly permuted GTPase that catalyzes slow GTP hydrolysis, GTPase activity is stimulated by the 30S ribosomal subunit. This chain is Small ribosomal subunit biogenesis GTPase RsgA, found in Prochlorococcus marinus (strain NATL1A).